We begin with the raw amino-acid sequence, 467 residues long: Na(+)/H(+) exchange regulatory cofactor-like protein nrfl-1 (467 aa).

2 PDZ domains span residues 12 to 94 (RLCV…ISEE) and 143 to 225 (LAEL…ASED). A disordered region spans residues 344–429 (MSSHTEVLPP…ASSTSGYDDD (86 aa)). A compositionally biased stretch (polar residues) spans 407–425 (PSPLSNGSSHGYAASSTSG).

As to quaternary structure, interacts (via PDZ 2 domain) with aat-6 (via PDZ-binding motif); the interaction sequesters aat-6 to the apical cell membrane of intestinal cells. Phosphorylated. As to expression, expressed in the excretory canal and intestine. Expressed on the apical cell membrane of intestinal cells (at protein level).

The protein localises to the cell projection. The protein resides in the microvillus membrane. It localises to the apical cell membrane. Scaffold protein that connects plasma membrane proteins with members of the ezrin/moesin/radixin family and thereby helps to link them to the actin cytoskeleton and to regulate their surface expression. Anchors the amino acid transporter protein aat-6 to the apical cell membrane of intestinal cells, particularly in older animals, in order to maintain amino acid homeostasis. May play a role in promoting fertility. The sequence is that of Na(+)/H(+) exchange regulatory cofactor-like protein nrfl-1 from Caenorhabditis elegans.